The chain runs to 374 residues: DNA-directed RNA polymerase subunit alpha (374 aa).

The interval 1–270 (MIFDEDSSSV…DQFQQFINFD (270 aa)) is alpha N-terminal domain (alpha-NTD). Positions 282-374 (KDVLPYDSNL…ESLSKQYSEE (93 aa)) are alpha C-terminal domain (alpha-CTD).

This sequence belongs to the RNA polymerase alpha chain family. In terms of assembly, homodimer. The RNAP catalytic core consists of 2 alpha, 1 beta, 1 beta' and 1 omega subunit. When a sigma factor is associated with the core the holoenzyme is formed, which can initiate transcription.

It carries out the reaction RNA(n) + a ribonucleoside 5'-triphosphate = RNA(n+1) + diphosphate. Functionally, DNA-dependent RNA polymerase catalyzes the transcription of DNA into RNA using the four ribonucleoside triphosphates as substrates. This Ehrlichia ruminantium (strain Welgevonden) protein is DNA-directed RNA polymerase subunit alpha.